The primary structure comprises 238 residues: 2-phytyl-1,4-naphtoquinone methyltransferase (238 aa).

This sequence belongs to the class I-like SAM-binding methyltransferase superfamily. MenG/UbiE family.

It catalyses the reaction demethylphylloquinol + S-adenosyl-L-methionine = phylloquinol + S-adenosyl-L-homocysteine + H(+). The protein operates within cofactor biosynthesis; phylloquinone biosynthesis. Its function is as follows. Methyltransferase required for the conversion of 2-phytyl-1,4-beta-naphthoquinol to phylloquinol. This chain is 2-phytyl-1,4-naphtoquinone methyltransferase, found in Synechocystis sp. (strain ATCC 27184 / PCC 6803 / Kazusa).